Consider the following 375-residue polypeptide: WAT1-related protein At1g70260 (375 aa).

Transmembrane regions (helical) follow at residues 10-30, 41-61, 72-92, 106-126, 143-163, 191-211, 225-245, 259-278, 289-309, and 312-332; these read LVPF…TIMA, FVFV…FSFL, IFSW…IFMF, IVVC…SIIL, MGTI…GPFI, WFLG…FNVV, VASF…LFME, LYLI…SVHV, VPLF…SFFV, and LHYG…TVSW. The EamA domain occupies 25–134; sequence ALTIMAKTAL…ILGRSKLDWR (110 aa). The tract at residues 337–356 is disordered; sequence ESEEKQSSNEERKSIKTIHH.

This sequence belongs to the drug/metabolite transporter (DMT) superfamily. Plant drug/metabolite exporter (P-DME) (TC 2.A.7.4) family.

It localises to the membrane. The sequence is that of WAT1-related protein At1g70260 from Arabidopsis thaliana (Mouse-ear cress).